We begin with the raw amino-acid sequence, 360 residues long: Phosphoserine aminotransferase (360 aa).

Arg-41 lines the L-glutamate pocket. The pyridoxal 5'-phosphate site is built by Trp-101, Thr-152, Asp-172, and Gln-195. N6-(pyridoxal phosphate)lysine is present on Lys-196. 237-238 (NT) is a binding site for pyridoxal 5'-phosphate.

Belongs to the class-V pyridoxal-phosphate-dependent aminotransferase family. SerC subfamily. Homodimer. Requires pyridoxal 5'-phosphate as cofactor.

It localises to the cytoplasm. It carries out the reaction O-phospho-L-serine + 2-oxoglutarate = 3-phosphooxypyruvate + L-glutamate. The enzyme catalyses 4-(phosphooxy)-L-threonine + 2-oxoglutarate = (R)-3-hydroxy-2-oxo-4-phosphooxybutanoate + L-glutamate. The protein operates within amino-acid biosynthesis; L-serine biosynthesis; L-serine from 3-phospho-D-glycerate: step 2/3. It participates in cofactor biosynthesis; pyridoxine 5'-phosphate biosynthesis; pyridoxine 5'-phosphate from D-erythrose 4-phosphate: step 3/5. Its function is as follows. Catalyzes the reversible conversion of 3-phosphohydroxypyruvate to phosphoserine and of 3-hydroxy-2-oxo-4-phosphonooxybutanoate to phosphohydroxythreonine. The sequence is that of Phosphoserine aminotransferase from Paraburkholderia phytofirmans (strain DSM 17436 / LMG 22146 / PsJN) (Burkholderia phytofirmans).